Consider the following 216-residue polypeptide: Large ribosomal subunit protein uL3 (216 aa).

Residues 137–157 (GASHGAHKNHRKPGSIGGAST) form a disordered region.

The protein belongs to the universal ribosomal protein uL3 family. In terms of assembly, part of the 50S ribosomal subunit. Forms a cluster with proteins L14 and L19.

Its function is as follows. One of the primary rRNA binding proteins, it binds directly near the 3'-end of the 23S rRNA, where it nucleates assembly of the 50S subunit. This is Large ribosomal subunit protein uL3 from Paenarthrobacter aurescens (strain TC1).